We begin with the raw amino-acid sequence, 1407 residues long: YEATS domain-containing protein 2 (1407 aa).

A Glycyl lysine isopeptide (Lys-Gly) (interchain with G-Cter in SUMO2) cross-link involves residue Lys-9. A coiled-coil region spans residues 54–80 (MKNKEHEIDVIDQRLIEARRMMDKLRA). Residue Lys-113 forms a Glycyl lysine isopeptide (Lys-Gly) (interchain with G-Cter in SUMO2) linkage. The interval 116 to 196 (LESPSRSSSP…SHKRELRNAD (81 aa)) is disordered. Residues Ser-118, Ser-120, and Ser-157 each carry the phosphoserine modification. The span at 119 to 148 (PSRSSSPTNQRSETPSANHSESDSLSQHND) shows a compositional bias: polar residues. The segment covering 149-165 (FLSDKDNNSNVDVEERP) has biased composition (basic and acidic residues). Lys-189 participates in a covalent cross-link: Glycyl lysine isopeptide (Lys-Gly) (interchain with G-Cter in SUMO2). A YEATS domain is found at 201–346 (ETSRLFVKKT…EDSVYPQSSE (146 aa)). Histone H3K27cr binding stretches follow at residues 260 to 262 (HPS) and 283 to 285 (WGE). At Thr-406 the chain carries Phosphothreonine. Ser-446, Ser-462, Ser-464, Ser-470, and Ser-472 each carry phosphoserine. The segment at 462–540 (SGSPISTPSP…GTGSPIPKIH (79 aa)) is disordered. Residue Thr-477 is modified to Phosphothreonine. A Glycyl lysine isopeptide (Lys-Gly) (interchain with G-Cter in SUMO2) cross-link involves residue Lys-486. Low complexity predominate over residues 511–520 (STPSTGSPTS). Position 534 is a phosphoserine (Ser-534). Residue Lys-550 forms a Glycyl lysine isopeptide (Lys-Gly) (interchain with G-Cter in SUMO2) linkage. Ser-573 carries the phosphoserine modification. Residue Lys-590 forms a Glycyl lysine isopeptide (Lys-Gly) (interchain with G-Cter in SUMO2) linkage. Position 625 is a phosphoserine (Ser-625). Residues Lys-647 and Lys-771 each participate in a glycyl lysine isopeptide (Lys-Gly) (interchain with G-Cter in SUMO2) cross-link. A disordered region spans residues 791 to 833 (SGSAAAGGSGSSGAGGGSGGGGGSGAGGTPSTSGPGGGPQHLT). The span at 795 to 829 (AAGGSGSSGAGGGSGGGGGSGAGGTPSTSGPGGGP) shows a compositional bias: gly residues. A Glycyl lysine isopeptide (Lys-Gly) (interchain with G-Cter in SUMO2) cross-link involves residue Lys-908. Lys-1095 participates in a covalent cross-link: Glycyl lysine isopeptide (Lys-Gly) (interchain with G-Cter in SUMO1); alternate. Residue Lys-1095 forms a Glycyl lysine isopeptide (Lys-Gly) (interchain with G-Cter in SUMO2); alternate linkage. Residue Lys-1115 forms a Glycyl lysine isopeptide (Lys-Gly) (interchain with G-Cter in SUMO2) linkage. Thr-1204 is modified (phosphothreonine). Residues Lys-1207 and Lys-1270 each participate in a glycyl lysine isopeptide (Lys-Gly) (interchain with G-Cter in SUMO2) cross-link.

In terms of assembly, component of the ADA2A-containing complex (ATAC), composed of KAT14, KAT2A, TADA2L, TADA3L, ZZ3, MBIP, WDR5, YEATS2, SGF29 and DR1.

It is found in the nucleus. Functionally, chromatin reader component of the ATAC complex, a complex with histone acetyltransferase activity on histones H3 and H4. YEATS2 specifically recognizes and binds histone H3 crotonylated at 'Lys-27' (H3K27cr). Crotonylation marks active promoters and enhancers and confers resistance to transcriptional repressors. This is YEATS domain-containing protein 2 from Mus musculus (Mouse).